Consider the following 171-residue polypeptide: S-ribosylhomocysteine lyase (171 aa).

Residues histidine 54, histidine 58, and cysteine 128 each contribute to the Fe cation site.

This sequence belongs to the LuxS family. As to quaternary structure, homodimer. Fe cation serves as cofactor.

The catalysed reaction is S-(5-deoxy-D-ribos-5-yl)-L-homocysteine = (S)-4,5-dihydroxypentane-2,3-dione + L-homocysteine. Functionally, involved in the synthesis of autoinducer 2 (AI-2) which is secreted by bacteria and is used to communicate both the cell density and the metabolic potential of the environment. The regulation of gene expression in response to changes in cell density is called quorum sensing. Catalyzes the transformation of S-ribosylhomocysteine (RHC) to homocysteine (HC) and 4,5-dihydroxy-2,3-pentadione (DPD). The sequence is that of S-ribosylhomocysteine lyase from Campylobacter concisus (strain 13826).